The sequence spans 293 residues: MAATSEHTILQFVSPSSTASATTSVLTARIHPLVIFNVCDCFVRRPDSAERVIGTLLGSILPDGTVDIRNSYAVPHNESSDQVAVDIDYHHNMLASHLKVNSKETIVGWYSTGAGVNGGSSLIHDFYAREVPNPIHLTVDTGFTNGEGTIKAFVSSNLSLGDRQLVAHFQEIPVDLRMVDAERVGFDVLKATSVDKLPNDLEGMELTMERLLTLINDVYKYVDSVVGGQIAPDNNIGRFIADAVASLPKLPPQVFDNLVNDSLQDQLLLLYLSSITRTQLSLAEKLNTAAQML.

Ala2 carries the post-translational modification N-acetylalanine. An MPN domain is found at 28–159; sequence ARIHPLVIFN…IKAFVSSNLS (132 aa).

It belongs to the eIF-3 subunit F family. In terms of assembly, component of the eukaryotic translation initiation factor 3 (eIF-3) complex. Binds to TIF3E1 and TIF3H1. As to expression, expressed in inflorescences, leaves, stems, siliques, roots and seedlings. Accumulates at highly levels in pollen grains, developing embryos and root tips.

The protein localises to the cytoplasm. Component of the eukaryotic translation initiation factor 3 (eIF-3) complex, which is involved in protein synthesis of a specialized repertoire of mRNAs and, together with other initiation factors, stimulates binding of mRNA and methionyl-tRNAi to the 40S ribosome. The eIF-3 complex specifically targets and initiates translation of a subset of mRNAs involved in cell proliferation (Potential). Involved in cell growth and differentiation, especially during embryogenesis and male gametophyte germination. Regulates sensitivity to sugars (e.g. sucrose). The protein is Eukaryotic translation initiation factor 3 subunit F (TIF3F1) of Arabidopsis thaliana (Mouse-ear cress).